A 267-amino-acid polypeptide reads, in one-letter code: Hydroxyethylthiazole kinase (267 aa).

Residue M44 coordinates substrate. The ATP site is built by K120 and T166. G193 provides a ligand contact to substrate.

This sequence belongs to the Thz kinase family. Requires Mg(2+) as cofactor.

The catalysed reaction is 5-(2-hydroxyethyl)-4-methylthiazole + ATP = 4-methyl-5-(2-phosphooxyethyl)-thiazole + ADP + H(+). It functions in the pathway cofactor biosynthesis; thiamine diphosphate biosynthesis; 4-methyl-5-(2-phosphoethyl)-thiazole from 5-(2-hydroxyethyl)-4-methylthiazole: step 1/1. Functionally, catalyzes the phosphorylation of the hydroxyl group of 4-methyl-5-beta-hydroxyethylthiazole (THZ). The protein is Hydroxyethylthiazole kinase of Desulfitobacterium hafniense (strain DSM 10664 / DCB-2).